Here is a 278-residue protein sequence, read N- to C-terminus: Orotidine 5'-phosphate decarboxylase (278 aa).

Residue Lys-96 is the Proton donor of the active site.

This sequence belongs to the OMP decarboxylase family. Type 2 subfamily.

It carries out the reaction orotidine 5'-phosphate + H(+) = UMP + CO2. The protein operates within pyrimidine metabolism; UMP biosynthesis via de novo pathway; UMP from orotate: step 2/2. The chain is Orotidine 5'-phosphate decarboxylase from Salinispora tropica (strain ATCC BAA-916 / DSM 44818 / JCM 13857 / NBRC 105044 / CNB-440).